The primary structure comprises 126 residues: Cornifin alpha (126 aa).

The residue at position 2 (S2) is an N-acetylserine. Repeat copies occupy residues 3-14, 18-29, 31-38, 39-46, 47-54, 55-62, 63-70, 71-78, 79-86, 87-94, 95-102, 103-110, and 111-118. The 2 X 12 AA approximate repeats stretch occupies residues 3–29; it reads SQQQKQPCTLPPQLQQHQVKQPCQPPP. The disordered stretch occupies residues 20–43; sequence QVKQPCQPPPQEPCVPKTKEPCQP. Positions 31–122 are 11 X 8 AA approximate tandem repeats; that stretch reads EPCVPKTKEP…CQPKVPEPCQ (92 aa). The tract at residues 104–126 is disordered; that stretch reads PCQSKVPQPCQPKVPEPCQTKQK.

Belongs to the cornifin (SPRR) family. Suprabasal layers of squamous-differentiated tissues such as epidermis, esophagus, tongue and trachea.

It is found in the cytoplasm. Functionally, cross-linked envelope protein of keratinocytes. It is a keratinocyte protein that first appears in the cell cytosol, but ultimately becomes cross-linked to membrane proteins by transglutaminase. All that results in the formation of an insoluble envelope beneath the plasma membrane. The sequence is that of Cornifin alpha from Oryctolagus cuniculus (Rabbit).